The following is a 491-amino-acid chain: Trypanothione reductase (491 aa).

35–52 lines the FAD pocket; it reads DVQATHGPPALVALGGTC. Cysteine 52 and cysteine 57 are oxidised to a cystine. The active-site Proton acceptor is the histidine 461.

It belongs to the class-I pyridine nucleotide-disulfide oxidoreductase family. As to quaternary structure, homodimer. Requires FAD as cofactor.

It is found in the cytoplasm. It catalyses the reaction trypanothione + NADP(+) = trypanothione disulfide + NADPH + H(+). Its function is as follows. Trypanothione is the parasite analog of glutathione; this enzyme is the equivalent of glutathione reductase. This chain is Trypanothione reductase (TPR), found in Leishmania donovani.